The primary structure comprises 781 residues: Mitochondrial inner membrane m-AAA protease component paraplegin (781 aa).

A mitochondrion-targeting transit peptide spans 1-43 (MAAALLLLRGLRPGPEPRPRRLWGLLSGRGPGLSSGAGARRPY). Disordered stretches follow at residues 22 to 56 (LWGLLSGRGPGLSSGAGARRPYAARGTPVGPAAAG) and 103 to 135 (TSRMKQKNKDNDKPKGKTPEDDEEEKRRKERED). The segment covering 36–56 (GAGARRPYAARGTPVGPAAAG) has biased composition (low complexity). A propeptide spans 44 to 105 (AARGTPVGPA…GSTLYFNTSR (62 aa)) (removed in mature form). Topologically, residues 106-144 (MKQKNKDNDKPKGKTPEDDEEEKRRKEREDQMYRERLRT) are mitochondrial matrix. A compositionally biased stretch (basic and acidic residues) spans 109 to 135 (KNKDNDKPKGKTPEDDEEEKRRKERED). Residues 145 to 165 (LFIIALVMSLLNSLSTSGGSI) form a helical membrane-spanning segment. The Mitochondrial intermembrane segment spans residues 166-248 (SWADFVNEML…DRIPVSYKRT (83 aa)). The helical transmembrane segment at 249 to 269 (GFFGNALYALGMTAVGLAILW) threads the bilayer. Residues 270-781 (YVFRLAGMTG…ASGEEEAPAP (512 aa)) lie on the Mitochondrial matrix side of the membrane. ATP-binding residues include alanine 312, glycine 352, cysteine 353, glycine 354, lysine 355, threonine 356, and leucine 357. Tyrosine 505 is modified (3'-nitrotyrosine). Histidine 574 is a binding site for Zn(2+). The active site involves glutamate 575. Zn(2+) contacts are provided by histidine 578 and aspartate 650. The tract at residues 701-781 (HEAKLLVAKA…ASGEEEAPAP (81 aa)) is interaction with PPIF.

The protein in the N-terminal section; belongs to the AAA ATPase family. It in the C-terminal section; belongs to the peptidase M41 family. Forms heterohexamers with SPG7 and AFG3L1. The m-AAA protease is either composed of homohexamers of AFG3L2 or heterohexamers of AFG3L1, AFG3L2 and/or SPG7. Component of the mitochondrial permeability transition pore complex (mPTPC), at least composed of SPG7, VDAC1 and PPIF. Interacts with MAIP1. Zn(2+) is required as a cofactor. Post-translationally, upon import into the mitochondrion, the N-terminal transit peptide is cleaved by the mitochondrial-processing peptidase (MPP) to generate an intermediate form which undergoes a second proteolytic cleavage mediated by proteases AFG3L1 and/or AFG3L2 removing an additional N-terminal fragment to generate the proteolytically active mature form. As to expression, expressed in the brain and retina (at protein level).

It is found in the mitochondrion inner membrane. The catalysed reaction is ATP + H2O = ADP + phosphate + H(+). Functionally, catalytic component of the m-AAA protease, a protease that plays a key role in proteostasis of inner mitochondrial membrane proteins, and which is essential for axonal and neuron development. SPG7 possesses both ATPase and protease activities: the ATPase activity is required to unfold substrates, threading them into the internal proteolytic cavity for hydrolysis into small peptide fragments. The m-AAA protease exerts a dual role in the mitochondrial inner membrane: it mediates the processing of specific regulatory proteins and ensures protein quality control by degrading misfolded polypeptides. Mediates protein maturation of the mitochondrial ribosomal subunit MRPL32/bL32m by catalyzing the cleavage of the presequence of MRPL32/bL32m prior to assembly into the mitochondrial ribosome. Acts as a regulator of calcium in neurons by mediating degradation of SMDT1/EMRE before its assembly with the uniporter complex, limiting the availability of SMDT1/EMRE for MCU assembly and promoting efficient assembly of gatekeeper subunits with MCU. Also regulates mitochondrial calcium by catalyzing degradation of MCU. Plays a role in the formation and regulation of the mitochondrial permeability transition pore (mPTP) and its proteolytic activity is dispensable for this function. This chain is Mitochondrial inner membrane m-AAA protease component paraplegin, found in Mus musculus (Mouse).